We begin with the raw amino-acid sequence, 230 residues long: Orotidine 5'-phosphate decarboxylase (230 aa).

Residues Asp-10, Lys-32, 59-68 (DLKYHDIPNT), Thr-119, Arg-180, Gln-189, Gly-209, and Arg-210 contribute to the substrate site. Lys-61 (proton donor) is an active-site residue.

It belongs to the OMP decarboxylase family. Type 1 subfamily. As to quaternary structure, homodimer.

The enzyme catalyses orotidine 5'-phosphate + H(+) = UMP + CO2. It participates in pyrimidine metabolism; UMP biosynthesis via de novo pathway; UMP from orotate: step 2/2. In terms of biological role, catalyzes the decarboxylation of orotidine 5'-monophosphate (OMP) to uridine 5'-monophosphate (UMP). The polypeptide is Orotidine 5'-phosphate decarboxylase (Haemophilus influenzae (strain 86-028NP)).